Here is a 102-residue protein sequence, read N- to C-terminus: Small ribosomal subunit protein uS10 (102 aa).

Belongs to the universal ribosomal protein uS10 family. In terms of assembly, part of the 30S ribosomal subunit.

Its function is as follows. Involved in the binding of tRNA to the ribosomes. This chain is Small ribosomal subunit protein uS10, found in Methanobrevibacter smithii (strain ATCC 35061 / DSM 861 / OCM 144 / PS).